The chain runs to 253 residues: Probable transcriptional regulatory protein Synpcc7942_1017 (253 aa).

It belongs to the TACO1 family.

It is found in the cytoplasm. This chain is Probable transcriptional regulatory protein Synpcc7942_1017, found in Synechococcus elongatus (strain ATCC 33912 / PCC 7942 / FACHB-805) (Anacystis nidulans R2).